Reading from the N-terminus, the 468-residue chain is Bifunctional protein GlmU (468 aa).

Residues M1–R233 are pyrophosphorylase. UDP-N-acetyl-alpha-D-glucosamine is bound by residues L15–G18, K29, Q79, and G84–T85. Mg(2+) is bound at residue D109. UDP-N-acetyl-alpha-D-glucosamine is bound by residues G146, E159, N174, and N231. Position 231 (N231) interacts with Mg(2+). Positions S234–E254 are linker. Residues G255–G468 form an N-acetyltransferase region. UDP-N-acetyl-alpha-D-glucosamine is bound by residues R336 and K354. The active-site Proton acceptor is H366. UDP-N-acetyl-alpha-D-glucosamine contacts are provided by Y369 and N380. Residues A383, N389–Y390, and A426 each bind acetyl-CoA.

It in the N-terminal section; belongs to the N-acetylglucosamine-1-phosphate uridyltransferase family. This sequence in the C-terminal section; belongs to the transferase hexapeptide repeat family. As to quaternary structure, homotrimer. It depends on Mg(2+) as a cofactor.

Its subcellular location is the cytoplasm. It catalyses the reaction alpha-D-glucosamine 1-phosphate + acetyl-CoA = N-acetyl-alpha-D-glucosamine 1-phosphate + CoA + H(+). It carries out the reaction N-acetyl-alpha-D-glucosamine 1-phosphate + UTP + H(+) = UDP-N-acetyl-alpha-D-glucosamine + diphosphate. Its pathway is nucleotide-sugar biosynthesis; UDP-N-acetyl-alpha-D-glucosamine biosynthesis; N-acetyl-alpha-D-glucosamine 1-phosphate from alpha-D-glucosamine 6-phosphate (route II): step 2/2. It participates in nucleotide-sugar biosynthesis; UDP-N-acetyl-alpha-D-glucosamine biosynthesis; UDP-N-acetyl-alpha-D-glucosamine from N-acetyl-alpha-D-glucosamine 1-phosphate: step 1/1. It functions in the pathway bacterial outer membrane biogenesis; LPS lipid A biosynthesis. Functionally, catalyzes the last two sequential reactions in the de novo biosynthetic pathway for UDP-N-acetylglucosamine (UDP-GlcNAc). The C-terminal domain catalyzes the transfer of acetyl group from acetyl coenzyme A to glucosamine-1-phosphate (GlcN-1-P) to produce N-acetylglucosamine-1-phosphate (GlcNAc-1-P), which is converted into UDP-GlcNAc by the transfer of uridine 5-monophosphate (from uridine 5-triphosphate), a reaction catalyzed by the N-terminal domain. The polypeptide is Bifunctional protein GlmU (Rubrobacter xylanophilus (strain DSM 9941 / JCM 11954 / NBRC 16129 / PRD-1)).